A 320-amino-acid chain; its full sequence is NAD kinase (320 aa).

Aspartate 96 functions as the Proton acceptor in the catalytic mechanism. Residues aspartate 96 to glycine 97, arginine 101, asparagine 170 to glutamate 171, aspartate 200, and threonine 211 to serine 216 contribute to the NAD(+) site.

This sequence belongs to the NAD kinase family. It depends on a divalent metal cation as a cofactor.

The protein localises to the cytoplasm. It carries out the reaction NAD(+) + ATP = ADP + NADP(+) + H(+). In terms of biological role, involved in the regulation of the intracellular balance of NAD and NADP, and is a key enzyme in the biosynthesis of NADP. Catalyzes specifically the phosphorylation on 2'-hydroxyl of the adenosine moiety of NAD to yield NADP. This Rhodococcus opacus (strain B4) protein is NAD kinase.